Here is a 695-residue protein sequence, read N- to C-terminus: Solute carrier family 53 member 1 (695 aa).

Over 1–228 the chain is Cytoplasmic; that stretch reads MKFAEHLSAH…RVPPLGAAQP (228 aa). Residues 2–224 form the SPX domain; it reads KFAEHLSAHI…MKRLRVPPLG (223 aa). Residues 158-165 are important for inositol polyphosphate binding; it reads KILKKHDK. A helical transmembrane segment spans residues 229–259; that stretch reads APAWTTFRVGLFCGIFIVLNITLVFAAVFKL. The Extracellular portion of the chain corresponds to 260-264; that stretch reads ETDRT. The helical transmembrane segment at 265–296 threads the bilayer; the sequence is VWPLIRIYRGGFLLIEFLFLLGINTYGWRQAG. Topologically, residues 297–309 are cytoplasmic; it reads VNHVLIFELNPRN. Residues 310–337 form a helical membrane-spanning segment; it reads NLSHQHLFEIAGFLGILWCLSLLACFFA. The Extracellular portion of the chain corresponds to 338 to 343; sequence PISIIP. A helical transmembrane segment spans residues 344 to 365; it reads IYVYPLALYGFMVFFLINPTKT. Residues 366–383 constitute an intramembrane region (helical); the sequence is FYYKSRFWLLKLLFRVFT. Residues 384–388 lie on the Cytoplasmic side of the membrane; that stretch reads APFHK. Residues 389–422 traverse the membrane as a discontinuously helical segment; that stretch reads VGFADFWLADQLNSLSVILMDLEYMICFYSFELK. Asp398 and Asn401 together coordinate phosphate. Residues 423-429 lie on the Extracellular side of the membrane; sequence WDESKGL. The discontinuously helical transmembrane segment at 430–471 threads the bilayer; sequence LPNDPQEPEFCHKYSYGVRAIVQCIPAWLRFIQCLRRYRDTR. The EXS domain occupies 439-642; the sequence is FCHKYSYGVR…LNADDQTLLE (204 aa). A topological domain (cytoplasmic) is located at residue Arg472. Residues 473-503 form a helical membrane-spanning segment; sequence AFPHLVNAGKYSTTFFTVTFAALYSTHEEQN. Phosphate is bound by residues Lys482 and Tyr483. Over 504–506 the chain is Extracellular; it reads HSD. Residues 507-534 form a helical membrane-spanning segment; that stretch reads TVVFFYLWVFFCIISSCYTLIWDLKMDW. Topologically, residues 535–553 are cytoplasmic; it reads GLFDKNAGENTFLREEIVY. Residues 554-584 traverse the membrane as a discontinuously helical segment; that stretch reads PQKAYYYCAIIEDVILRFAWTIQISITATFK. Arg570 contacts phosphate. At 585–586 the chain is on the extracellular side; sequence PH. The chain crosses the membrane as a helical span at residues 587–625; the sequence is VGNIIATVFAPLEVFRRFVWNFFRLENEHLNNCGEFRAV. Phosphate is bound by residues Arg602 and Arg603. Residues 626-695 lie on the Cytoplasmic side of the membrane; that stretch reads RDISVAPLNA…IEDTDDEANT (70 aa). Ser667 carries the phosphoserine modification. Residues 671-695 are disordered; that stretch reads PRLASQSKARDTKVLIEDTDDEANT. Position 689 is a phosphothreonine (Thr689).

The protein belongs to the SYG1 (TC 2.A.94) family. In terms of assembly, homodimer. Expressed in pancreatic islets.

It is found in the cell membrane. The enzyme catalyses phosphate(in) = phosphate(out). Inorganic ion transporter that mediates phosphate ion export across plasma membrane. Plays a major role in phosphate homeostasis, preventing intracellular phosphate accumulation and possible calcium phosphate precipitation, ultimately preserving calcium signaling. Binds inositol hexakisphosphate (Ins6P) and similar inositol polyphosphates, such as 5-diphospho-inositol pentakisphosphate (5-InsP7), which are important intracellular signaling molecules involved in regulation of phosphate flux. In terms of biological role, (Microbial infection) Receptor for xenotropic and polytropic murine leukemia (X- and P-MLV) retroviruses. Confers susceptibility to X- or P-MLV infection in vitro. This chain is Solute carrier family 53 member 1, found in Mus musculus (Mouse).